Reading from the N-terminus, the 662-residue chain is Bifunctional polymyxin resistance protein ArnA (662 aa).

A formyltransferase ArnAFT region spans residues 1-307 (MTSKAVVFAY…ELGLVEGARL (307 aa)). The Proton donor; for formyltransferase activity role is filled by His106. (6R)-10-formyltetrahydrofolate is bound by residues Arg116 and 138-142 (IERAD). A dehydrogenase ArnADH region spans residues 316 to 662 (RRTRVLILGV…EALREREAQA (347 aa)). NAD(+) contacts are provided by residues Asp349 and 370 to 371 (DI). UDP-alpha-D-glucuronate is bound by residues Ala395, Tyr400, and 434–435 (TS). The active-site Proton acceptor; for decarboxylase activity is Glu436. UDP-alpha-D-glucuronate-binding positions include Arg462, Asn493, 527 to 536 (RLVDGGAQKR), and Tyr614. The active-site Proton donor; for decarboxylase activity is the Arg620.

In the N-terminal section; belongs to the Fmt family. UDP-L-Ara4N formyltransferase subfamily. It in the C-terminal section; belongs to the NAD(P)-dependent epimerase/dehydratase family. UDP-glucuronic acid decarboxylase subfamily. As to quaternary structure, homohexamer, formed by a dimer of trimers.

It catalyses the reaction UDP-alpha-D-glucuronate + NAD(+) = UDP-beta-L-threo-pentopyranos-4-ulose + CO2 + NADH. The catalysed reaction is UDP-4-amino-4-deoxy-beta-L-arabinose + (6R)-10-formyltetrahydrofolate = UDP-4-deoxy-4-formamido-beta-L-arabinose + (6S)-5,6,7,8-tetrahydrofolate + H(+). The protein operates within nucleotide-sugar biosynthesis; UDP-4-deoxy-4-formamido-beta-L-arabinose biosynthesis; UDP-4-deoxy-4-formamido-beta-L-arabinose from UDP-alpha-D-glucuronate: step 1/3. It participates in nucleotide-sugar biosynthesis; UDP-4-deoxy-4-formamido-beta-L-arabinose biosynthesis; UDP-4-deoxy-4-formamido-beta-L-arabinose from UDP-alpha-D-glucuronate: step 3/3. Its pathway is bacterial outer membrane biogenesis; lipopolysaccharide biosynthesis. Its function is as follows. Bifunctional enzyme that catalyzes the oxidative decarboxylation of UDP-glucuronic acid (UDP-GlcUA) to UDP-4-keto-arabinose (UDP-Ara4O) and the addition of a formyl group to UDP-4-amino-4-deoxy-L-arabinose (UDP-L-Ara4N) to form UDP-L-4-formamido-arabinose (UDP-L-Ara4FN). The modified arabinose is attached to lipid A and is required for resistance to polymyxin and cationic antimicrobial peptides. The chain is Bifunctional polymyxin resistance protein ArnA from Pseudomonas aeruginosa (strain LESB58).